We begin with the raw amino-acid sequence, 526 residues long: Fumitremorgin C synthase (526 aa).

The chain crosses the membrane as a helical span at residues 4-24 (LPLSPAVLFLTITLPILYFWI). Cys-443 serves as a coordination point for heme.

Belongs to the cytochrome P450 family. The cofactor is heme.

It localises to the membrane. The catalysed reaction is tryprostatin A + reduced [NADPH--hemoprotein reductase] + O2 = fumitremorgin C + oxidized [NADPH--hemoprotein reductase] + 2 H2O + H(+). It functions in the pathway mycotoxin biosynthesis. In terms of biological role, cytochrome P450 monooxygenase; part of the gene cluster that mediates the biosynthesis of fumitremorgins, indole alkaloids that carry not only intriguing chemical structures, but also interesting biological and pharmacological activities. The biosynthesis of fumitremorgin-type alkaloids begins by condensation of the two amino acids L-tryptophan and L-proline to brevianamide F, catalyzed by the non-ribosomal peptide synthetase ftmPS/ftmA. Brevianamide F is then prenylated by the prenyltransferase ftmPT1/ftmB in the presence of dimethylallyl diphosphate, resulting in the formation of tryprostatin B. The three cytochrome P450 monooxygenases, ftmP450-1/ftmC, ftmP450-2/ftmE and ftmP450-3/FtmG, are responsible for the conversion of tryprostatin B to 6-hydroxytryprostatin B, tryprostatin A to fumitremorgin C and fumitremorgin C to 12,13-dihydroxyfumitremorgin C, respectively. The putative methyltransferase ftmMT/ftmD is expected for the conversion of 6-hydroxytryprostatin B to tryprostatin A. FtmPT2/FtmH catalyzes the prenylation of 12,13-dihydroxyfumitre-morgin C in the presence of dimethylallyl diphosphate, resulting in the formation of fumitremorgin B. Fumitremorgin B is further converted to verruculogen by ftmOx1/ftmF via the insertion of an endoperoxide bond between the two prenyl moieties. Finally, verruculogen is further converted to fumitremorgin A by the verruculogen prenyltransferase ftmPT3. This chain is Fumitremorgin C synthase, found in Neosartorya fischeri (strain ATCC 1020 / DSM 3700 / CBS 544.65 / FGSC A1164 / JCM 1740 / NRRL 181 / WB 181) (Aspergillus fischerianus).